The primary structure comprises 119 residues: Ribonuclease P protein component (119 aa).

Belongs to the RnpA family. In terms of assembly, consists of a catalytic RNA component (M1 or rnpB) and a protein subunit.

It catalyses the reaction Endonucleolytic cleavage of RNA, removing 5'-extranucleotides from tRNA precursor.. In terms of biological role, RNaseP catalyzes the removal of the 5'-leader sequence from pre-tRNA to produce the mature 5'-terminus. It can also cleave other RNA substrates such as 4.5S RNA. The protein component plays an auxiliary but essential role in vivo by binding to the 5'-leader sequence and broadening the substrate specificity of the ribozyme. The sequence is that of Ribonuclease P protein component from Sodalis glossinidius (strain morsitans).